Here is a 386-residue protein sequence, read N- to C-terminus: bHLH transcription factor RHL1 (386 aa).

Residues 119-186 (FTGSLNGTQP…RRGQATDPHS (68 aa)) are disordered. Residues 127-137 (QPQQHFQHPPQ) are compositionally biased toward low complexity. A compositionally biased stretch (polar residues) spans 138-151 (GNSNQIQGQNFGAT). The tract at residues 180–193 (QATDPHSIAERLRR) is basic motif; degenerate. Residues 180–229 (QATDPHSIAERLRRERIAERMKALQELVPNANKTDKASMLDEIIDYVKFL) enclose the bHLH domain. The tract at residues 194 to 229 (ERIAERMKALQELVPNANKTDKASMLDEIIDYVKFL) is helix-loop-helix motif.

Expressed in root epidermal cells.

It localises to the nucleus. Transcription factor that regulates the development of root hairs. The polypeptide is bHLH transcription factor RHL1 (Lotus japonicus (Lotus corniculatus var. japonicus)).